A 773-amino-acid polypeptide reads, in one-letter code: Protein YhgF (773 aa).

The S1 motif domain occupies 651-720 (GMILEGAVTN…QRKRIALTMR (70 aa)). Residues 721–773 (LDEQPGETNARRGGGNERPQNNRPAAKPRGREAQPAGNSAMMDALAAAMGKKR) are disordered.

The chain is Protein YhgF (yhgF) from Escherichia coli (strain K12).